The chain runs to 513 residues: Lysine--tRNA ligase (513 aa).

Mg(2+) contacts are provided by Glu-422 and Glu-429.

The protein belongs to the class-II aminoacyl-tRNA synthetase family. Homodimer. It depends on Mg(2+) as a cofactor.

It is found in the cytoplasm. The catalysed reaction is tRNA(Lys) + L-lysine + ATP = L-lysyl-tRNA(Lys) + AMP + diphosphate. This chain is Lysine--tRNA ligase, found in Tolumonas auensis (strain DSM 9187 / NBRC 110442 / TA 4).